The chain runs to 165 residues: Zinc finger C2H2 protein ECU11_0990 (165 aa).

Composition is skewed to basic and acidic residues over residues 1–10 (MEAESPKERV) and 19–32 (DPER…DTSS). The interval 1–38 (MEAESPKERVQGVSGESWDPERGVKEREDTSSKKGKGV) is disordered. C2H2-type zinc fingers lie at residues 103 to 125 (FGCE…KAQH) and 136 to 158 (LFCP…SRYH).

The sequence is that of Zinc finger C2H2 protein ECU11_0990 from Encephalitozoon cuniculi (strain GB-M1) (Microsporidian parasite).